Reading from the N-terminus, the 264-residue chain is 3-methyl-2-oxobutanoate hydroxymethyltransferase (264 aa).

Residues aspartate 45 and aspartate 84 each contribute to the Mg(2+) site. 3-methyl-2-oxobutanoate contacts are provided by residues aspartate 45 to serine 46, aspartate 84, and lysine 112. Glutamate 114 is a binding site for Mg(2+). The active-site Proton acceptor is the glutamate 181.

Belongs to the PanB family. As to quaternary structure, homodecamer; pentamer of dimers. Requires Mg(2+) as cofactor.

The protein resides in the cytoplasm. The catalysed reaction is 3-methyl-2-oxobutanoate + (6R)-5,10-methylene-5,6,7,8-tetrahydrofolate + H2O = 2-dehydropantoate + (6S)-5,6,7,8-tetrahydrofolate. The protein operates within cofactor biosynthesis; (R)-pantothenate biosynthesis; (R)-pantoate from 3-methyl-2-oxobutanoate: step 1/2. Catalyzes the reversible reaction in which hydroxymethyl group from 5,10-methylenetetrahydrofolate is transferred onto alpha-ketoisovalerate to form ketopantoate. The chain is 3-methyl-2-oxobutanoate hydroxymethyltransferase from Cronobacter sakazakii (strain ATCC BAA-894) (Enterobacter sakazakii).